The sequence spans 147 residues: Hemoglobin subunit gamma (147 aa).

In terms of domain architecture, Globin spans 3–147 (HFTAEEKAAI…VATALAHKYH (145 aa)). 2 residues coordinate heme b: His-64 and His-93.

The protein belongs to the globin family. As to quaternary structure, heterotetramer of two alpha chains and two gamma chains. Red blood cells.

In terms of biological role, this protein functions as an embryonic globin, but the gene structure and chromosomal location resemble more closely the human gamma chain gene, which codes for a fetal globin. This is Hemoglobin subunit gamma (HBG) from Oryctolagus cuniculus (Rabbit).